We begin with the raw amino-acid sequence, 365 residues long: NAD(P)H-quinone oxidoreductase subunit 1, chloroplastic (365 aa).

Transmembrane regions (helical) follow at residues 27–47 (VWIFVPIFSLVLGIITGVLVI), 98–118 (FSIGPSIAVISILLSYSVIPF), 129–149 (IGIFLWIAISSIAPIGLLMSG), 165–185 (AAQSISYEIPLTLCVLSISLL), 203–223 (FWGWNLWRQPIGFIIFLISSL), 253–273 (FGLFYVASYINLLISSLFVTI), 302–322 (IFGTTIGIFITLAKTYLFLFI), and 345–365 (FLLPISLGNLLLTTSFQLFSL).

The protein belongs to the complex I subunit 1 family. NDH is composed of at least 16 different subunits, 5 of which are encoded in the nucleus.

The protein resides in the plastid. It localises to the chloroplast thylakoid membrane. The enzyme catalyses a plastoquinone + NADH + (n+1) H(+)(in) = a plastoquinol + NAD(+) + n H(+)(out). It carries out the reaction a plastoquinone + NADPH + (n+1) H(+)(in) = a plastoquinol + NADP(+) + n H(+)(out). Its function is as follows. NDH shuttles electrons from NAD(P)H:plastoquinone, via FMN and iron-sulfur (Fe-S) centers, to quinones in the photosynthetic chain and possibly in a chloroplast respiratory chain. The immediate electron acceptor for the enzyme in this species is believed to be plastoquinone. Couples the redox reaction to proton translocation, and thus conserves the redox energy in a proton gradient. The sequence is that of NAD(P)H-quinone oxidoreductase subunit 1, chloroplastic from Arabis hirsuta (Hairy rock-cress).